We begin with the raw amino-acid sequence, 676 residues long: Potassium voltage-gated channel subfamily KQT member 1 (676 aa).

Disordered stretches follow at residues methionine 1 to alanine 28 and alanine 62 to proline 84. At methionine 1–tryptophan 120 the chain is on the cytoplasmic side. At serine 27 the chain carries Phosphoserine; by PKA. Residues alanine 62–proline 73 are compositionally biased toward pro residues. Residues lysine 121–leucine 142 form a helical membrane-spanning segment. At serine 143 to threonine 153 the chain is on the extracellular side. Residues glycine 154–tryptophan 176 form a helical membrane-spanning segment. Topologically, residues serine 177 to arginine 192 are cytoplasmic. Residues phenylalanine 193–lysine 218 traverse the membrane as a helical segment. Residues glycine 219–alanine 226 lie on the Extracellular side of the membrane. A helical; Voltage-sensor membrane pass occupies residues isoleucine 227–aspartate 242. Positions methionine 238 to glycine 246 are interaction with KCNE3. Residues arginine 243 to glutamine 260 lie on the Cytoplasmic side of the membrane. Residue glutamine 244 participates in a 1,2-diacyl-sn-glycero-3-phospho-(1D-myo-inositol-4,5-bisphosphate) binding. A helical transmembrane segment spans residues glutamate 261–alanine 283. At glutamate 284–tyrosine 299 the chain is on the extracellular side. Asparagine 289 carries an N-linked (GlcNAc...) asparagine glycan. An intramembrane region (pore-forming) is located at residues alanine 300–proline 320. The Extracellular segment spans residues glutamine 321–threonine 322. The chain crosses the membrane as a helical span at residues tryptophan 323–glycine 348. The Cytoplasmic segment spans residues serine 349 to serine 676. An interaction with CALM region spans residues alanine 370–tyrosine 382. A phosphoserine mark is found at serine 407 and serine 409. The interaction with CALM; calcium-dependent stretch occupies residues lysine 515–phenylalanine 529. The tract at residues proline 535 to leucine 572 is interaction with KCNE1 C-terminus. A coiled-coil region spans residues serine 585–glycine 621. Positions isoleucine 588–leucine 616 are interaction with AKAP9. The tract at residues glycine 589 to histidine 620 is C-terminal assembly domain (tetramerization). The disordered stretch occupies residues histidine 620 to serine 676. The segment covering serine 623 to arginine 632 has biased composition (gly residues). Residues proline 655–glutamine 664 show a composition bias toward polar residues.

Belongs to the potassium channel family. KQT (TC 1.A.1.15) subfamily. Kv7.1/KCNQ1 sub-subfamily. In terms of assembly, tetramer. Heterotetramer with KCNE1; targets to the membrane raft. Interacts (via C-terminus) with calmodulin; forms a heterooctameric structure (with 4:4 KCNQ1:CALM stoichiometry); the interaction is calcium-independent, constitutive, participates in the proper assembly of a functional channel and also acts a calcium sensor. KCNQ1 channels interact more strongly with Ca(2+)-CALM than with apoCALM. Interacts with AKAP9; targets protein kinase A (PKA) catalytic and regulatory subunits and protein phosphatase 1 (PP1) to the KCNQ1-KCNE1 complex, allowing PKA-mediated phosphorylation and increase of delayed rectifier potassium channel activity. Interacts with KCNE2; forms a heterooligomer complex that targets to the membrane raft and leading to currents with an apparently instantaneous activation, a rapid deactivation process and a linear current-voltage relationship and decreases the amplitude of the outward current. Interacts with AP2M1; mediates estrogen-induced internalization via clathrin-coated vesicles. Interacts with NEDD4L; promotes internalization and decreases I(Ks) currents. Interacts with USP2; counteracts the NEDD4L-specific down-regulation of I(Ks) and restore plasma membrane localization. Heterotetramer with KCNQ5; has a voltage-gated potassium channel activity. Interacts with KCNE3; four KCNE3 molecules are bound to one KCNQ1 tetramer (4:4 KCNQ1:KCNE3 stoichiometry); alters membrane raft localization; affects KCNQ1 structure and gating properties. Interacts with KCNE4; impairs KCNQ1 localization in lipid rafts and inhibits voltage-gated potassium channel activity. Interacts with KCNE5; impairs KCNQ1 localization in lipid rafts and only conducts current upon strong and continued depolarization. Interacts with SLC5A3; forms coregulatory channel-transporter complexes that modulate Na(+)-coupled myo-inositol influx through the transporter. Phosphorylation at Ser-27 by PKA; increases delayed rectifier potassium channel activity of the KCNQ1-KCNE1 complex through a macromolecular complex that includes PKA, PP1, and the targeting protein AKAP9. In terms of processing, ubiquitinated by NEDD4L; promotes internalization. The ubiquitinylated form is internalized through a clathrin-mediated endocytosis by interacting with AP2M1 and is recycled back to the cell membrane via RAB4A and RAB11A. Post-translationally, deubiquitinated by USP2; counteracts the NEDD4L-specific down-regulation of I(Ks) and restores the membrane localization. As to expression, abundantly expressed in heart, pancreas, prostate, kidney, small intestine and peripheral blood leukocytes. Less abundant in placenta, lung, spleen, colon, thymus, testis and ovaries.

It is found in the cell membrane. The protein localises to the cytoplasmic vesicle membrane. It localises to the early endosome. The protein resides in the membrane raft. Its subcellular location is the endoplasmic reticulum. It is found in the basolateral cell membrane. The protein localises to the apical cell membrane. It carries out the reaction K(+)(in) = K(+)(out). Its activity is regulated as follows. PIP2 molecule is essential to activate KCNQ channels by inducing the coupling of the voltage-sensing domain (VSD) and the pore-forming domain (PD). Upon channel activation, PIP2 disrupts the VSD-calmodulin/CALM interactions, causing the release of CALM from the VSD which triggers the opening of the gate. Calcium potentiates KCNQ1 channel current through calcium-bound CALM. Calcium-bound CALM competes with PIP2 to stabilize the channel open state. Functionally, pore-forming subunit of the voltage-gated potassium (Kv) channel involved in the regulation of cardiomyocyte excitability and important in normal development and functions of myocardium, inner ear, stomach and colon. Associates with KCNE beta subunits that modulates current kinetics. Induces a voltage-dependent current by rapidly activating and slowly deactivating potassium-selective outward current. Also promotes a delayed voltage activated potassium current showing outward rectification characteristic. During beta-adrenergic receptor stimulation, participates in cardiac repolarization by associating with KCNE1 to form the I(Ks) cardiac potassium current that increases the amplitude and slows down the activation kinetics of outward potassium current I(Ks). Muscarinic agonist oxotremorine-M strongly suppresses KCNQ1/KCNE1 current. When associated with KCNE3, forms the potassium channel that is important for cyclic AMP-stimulated intestinal secretion of chloride ions. This interaction with KCNE3 is reduced by 17beta-estradiol, resulting in the reduction of currents. During conditions of increased substrate load, maintains the driving force for proximal tubular and intestinal sodium ions absorption, gastric acid secretion, and cAMP-induced jejunal chloride ions secretion. Allows the provision of potassium ions to the luminal membrane of the secretory canaliculus in the resting state as well as during stimulated acid secretion. When associated with KCNE2, forms a heterooligomer complex leading to currents with an apparently instantaneous activation, a rapid deactivation process and a linear current-voltage relationship and decreases the amplitude of the outward current. When associated with KCNE4, inhibits voltage-gated potassium channel activity. When associated with KCNE5, this complex only conducts current upon strong and continued depolarization. Also forms a heterotetramer with KCNQ5; has a voltage-gated potassium channel activity. Binds with phosphatidylinositol 4,5-bisphosphate. KCNQ1-KCNE2 channel associates with Na(+)-coupled myo-inositol symporter in the apical membrane of choroid plexus epithelium and regulates the myo-inositol gradient between blood and cerebrospinal fluid with an impact on neuron excitability. In terms of biological role, non-functional alone but modulatory when coexpressed with the full-length isoform 1. In Homo sapiens (Human), this protein is Potassium voltage-gated channel subfamily KQT member 1.